Consider the following 351-residue polypeptide: Glycerol-3-phosphate dehydrogenase 1-like protein (351 aa).

12–17 contacts NAD(+); that stretch reads GSGNWG. Substrate is bound at residue Lys-122. Residue Ala-155 coordinates NAD(+). The active-site Proton acceptor is the Lys-206. NAD(+)-binding residues include Arg-271, Lys-298, and Gln-300. 271 to 272 is a binding site for substrate; that stretch reads RN.

It belongs to the NAD-dependent glycerol-3-phosphate dehydrogenase family. As to quaternary structure, interacts with SCN5A.

The protein resides in the cytoplasm. It catalyses the reaction sn-glycerol 3-phosphate + NAD(+) = dihydroxyacetone phosphate + NADH + H(+). Functionally, plays a role in regulating cardiac sodium current; decreased enzymatic activity with resulting increased levels of glycerol 3-phosphate activating the DPD1L-dependent SCN5A phosphorylation pathway, may ultimately lead to decreased sodium current; cardiac sodium current may also be reduced due to alterations of NAD(H) balance induced by DPD1L. This chain is Glycerol-3-phosphate dehydrogenase 1-like protein (GPD1L), found in Pongo abelii (Sumatran orangutan).